Here is a 326-residue protein sequence, read N- to C-terminus: Serpentine receptor class gamma-14 (326 aa).

A run of 7 helical transmembrane segments spans residues 36-56, 67-83, 115-135, 156-176, 204-224, 243-263, and 274-294; these read QIIY…TILW, FFTL…SILI, IIML…VLLV, LKYV…NIAI, FQLV…AITL, VIIS…SFFF, and GFSF…MICV.

This sequence belongs to the nematode receptor-like protein srg family.

The protein resides in the membrane. This Caenorhabditis elegans protein is Serpentine receptor class gamma-14 (srg-14).